We begin with the raw amino-acid sequence, 161 residues long: Small heat shock protein ibp (161 aa).

A sHSP domain is found at 35-150; that stretch reads EKPLSDTPAY…KPKKIFINIP (116 aa).

This sequence belongs to the small heat shock protein (HSP20) family.

This is Small heat shock protein ibp (ibp) from Buchnera aphidicola subsp. Schizaphis graminum (strain Sg).